A 385-amino-acid polypeptide reads, in one-letter code: UPF0284 protein P9215_05181 (385 aa).

This sequence belongs to the UPF0284 family.

This is UPF0284 protein P9215_05181 from Prochlorococcus marinus (strain MIT 9215).